The primary structure comprises 142 residues: Peptide methionine sulfoxide reductase MsrB (142 aa).

Positions 2–125 (IKKNKNDLNE…NSAAVQFIPY (124 aa)) constitute a MsrB domain. The Nucleophile role is filled by Cys-114.

Belongs to the MsrB Met sulfoxide reductase family.

The enzyme catalyses L-methionyl-[protein] + [thioredoxin]-disulfide + H2O = L-methionyl-(R)-S-oxide-[protein] + [thioredoxin]-dithiol. The polypeptide is Peptide methionine sulfoxide reductase MsrB (Staphylococcus saprophyticus subsp. saprophyticus (strain ATCC 15305 / DSM 20229 / NCIMB 8711 / NCTC 7292 / S-41)).